Here is a 466-residue protein sequence, read N- to C-terminus: Dihydrolipoyl dehydrogenase (466 aa).

Residues 34-42, K51, and G114 each bind FAD; that span reads ERVHLGGIC. A disulfide bond links C42 and C47. Residues 180–184, E203, and 269–272 contribute to the NAD(+) site; these read GSGAI and AIGV. Residues D311 and A319 each contribute to the FAD site. Catalysis depends on H445, which acts as the Proton acceptor.

The protein belongs to the class-I pyridine nucleotide-disulfide oxidoreductase family. As to quaternary structure, homodimer. FAD is required as a cofactor.

It is found in the cytoplasm. It catalyses the reaction N(6)-[(R)-dihydrolipoyl]-L-lysyl-[protein] + NAD(+) = N(6)-[(R)-lipoyl]-L-lysyl-[protein] + NADH + H(+). Its function is as follows. Lipoamide dehydrogenase is a component of the alpha-ketoacid dehydrogenase complexes. This is Dihydrolipoyl dehydrogenase (lpd) from Zymomonas mobilis subsp. mobilis (strain ATCC 31821 / ZM4 / CP4).